Consider the following 117-residue polypeptide: UPF0102 protein Ssed_4252 (117 aa).

This sequence belongs to the UPF0102 family.

In Shewanella sediminis (strain HAW-EB3), this protein is UPF0102 protein Ssed_4252.